The primary structure comprises 474 residues: ATP synthase subunit beta (474 aa).

ATP is bound at residue 158–165 (GGAGVGKT).

The protein belongs to the ATPase alpha/beta chains family. In terms of assembly, F-type ATPases have 2 components, CF(1) - the catalytic core - and CF(0) - the membrane proton channel. CF(1) has five subunits: alpha(3), beta(3), gamma(1), delta(1), epsilon(1). CF(0) has three main subunits: a(1), b(2) and c(9-12). The alpha and beta chains form an alternating ring which encloses part of the gamma chain. CF(1) is attached to CF(0) by a central stalk formed by the gamma and epsilon chains, while a peripheral stalk is formed by the delta and b chains.

The protein resides in the cell membrane. The catalysed reaction is ATP + H2O + 4 H(+)(in) = ADP + phosphate + 5 H(+)(out). Produces ATP from ADP in the presence of a proton gradient across the membrane. The catalytic sites are hosted primarily by the beta subunits. The chain is ATP synthase subunit beta from Tropheryma whipplei (strain Twist) (Whipple's bacillus).